Here is a 354-residue protein sequence, read N- to C-terminus: Inositol-tetrakisphosphate 1-kinase 1 (354 aa).

A compositionally biased stretch (basic and acidic residues) spans 1-16 (MRVHEEASEDKEREVE). The interval 1–24 (MRVHEEASEDKEREVEEAPDLMPL) is disordered. 1D-myo-inositol 1,3,4-trisphosphate is bound by residues Lys-53 and Lys-95. ATP contacts are provided by Arg-130 and Lys-180. In terms of domain architecture, ATP-grasp spans 140-347 (LNLSNAYGEV…FLLSLVQNKY (208 aa)). Positions 191 and 223 each coordinate 1D-myo-inositol 1,3,4-trisphosphate. ATP-binding positions include 212–223 (QEFVNHGGILFK) and Ser-238. Mg(2+) contacts are provided by Asp-303, Asp-318, and Asn-320. Asn-320 is a binding site for 1D-myo-inositol 1,3,4-trisphosphate.

Belongs to the ITPK1 family. Monomer. It depends on Mg(2+) as a cofactor. In terms of tissue distribution, expressed in roots, leaves, flowers, anthers and embryos.

The catalysed reaction is 1D-myo-inositol 3,4,5,6-tetrakisphosphate + ATP = 1D-myo-inositol 1,3,4,5,6-pentakisphosphate + ADP + H(+). The enzyme catalyses 1D-myo-inositol 1,3,4-trisphosphate + ATP = 1D-myo-inositol 1,3,4,5-tetrakisphosphate + ADP + H(+). It catalyses the reaction 1D-myo-inositol 1,3,4-trisphosphate + ATP = 1D-myo-inositol 1,3,4,6-tetrakisphosphate + ADP + H(+). Its function is as follows. Kinase that can phosphorylate various inositol polyphosphate such as Ins(3,4,5,6)P4 or Ins(1,3,4)P3 and participates in phytic acid biosynthesis in developing seeds. Phytic acid is the primary storage form of phosphorus in cereal grains and other plant seeds. This is Inositol-tetrakisphosphate 1-kinase 1 from Oryza sativa subsp. japonica (Rice).